The primary structure comprises 142 residues: uncharacterized protein (142 aa).

The next 2 helical transmembrane spans lie at 75-97 (VFFR…YIVA) and 107-124 (LSIV…KLFY).

It is found in the cell membrane. This is an uncharacterized protein from Archaeoglobus fulgidus (strain ATCC 49558 / DSM 4304 / JCM 9628 / NBRC 100126 / VC-16).